A 413-amino-acid polypeptide reads, in one-letter code: Tyrosine--tRNA ligase (413 aa).

The 'HIGH' region motif lies at 59-68; sequence PTAPDIHLGH. The short motif at 243 to 247 is the 'KMSKS' region element; the sequence is KMSKS. Residue K246 participates in ATP binding. An S4 RNA-binding domain is found at 351–411; sequence LAIGQLLKQA…GKRRFARVTL (61 aa).

The protein belongs to the class-I aminoacyl-tRNA synthetase family. TyrS type 2 subfamily. Homodimer.

The protein resides in the cytoplasm. The enzyme catalyses tRNA(Tyr) + L-tyrosine + ATP = L-tyrosyl-tRNA(Tyr) + AMP + diphosphate + H(+). In terms of biological role, catalyzes the attachment of tyrosine to tRNA(Tyr) in a two-step reaction: tyrosine is first activated by ATP to form Tyr-AMP and then transferred to the acceptor end of tRNA(Tyr). This Burkholderia mallei (strain ATCC 23344) protein is Tyrosine--tRNA ligase.